The chain runs to 346 residues: uncharacterized protein (346 aa).

It belongs to the Gfo/Idh/MocA family.

This is an uncharacterized protein from Escherichia coli (strain K12).